The sequence spans 278 residues: Large ribosomal subunit protein uL2 (278 aa).

The disordered stretch occupies residues 223–278 (GSVMNPNDHPHGGGEGKAPIGHPSPMSPWGKKTLGKKTRDHKAKSEKFIVRHRRAK). Over residues 255–264 (TLGKKTRDHK) the composition is skewed to basic residues.

The protein belongs to the universal ribosomal protein uL2 family. In terms of assembly, part of the 50S ribosomal subunit. Forms a bridge to the 30S subunit in the 70S ribosome.

Its function is as follows. One of the primary rRNA binding proteins. Required for association of the 30S and 50S subunits to form the 70S ribosome, for tRNA binding and peptide bond formation. It has been suggested to have peptidyltransferase activity; this is somewhat controversial. Makes several contacts with the 16S rRNA in the 70S ribosome. The chain is Large ribosomal subunit protein uL2 from Lacticaseibacillus paracasei (strain ATCC 334 / BCRC 17002 / CCUG 31169 / CIP 107868 / KCTC 3260 / NRRL B-441) (Lactobacillus paracasei).